The primary structure comprises 229 residues: Pyridoxal phosphate homeostasis protein (229 aa).

Position 36 is an N6-(pyridoxal phosphate)lysine (lysine 36).

Belongs to the pyridoxal phosphate-binding protein YggS/PROSC family. Monomer.

Its function is as follows. Pyridoxal 5'-phosphate (PLP)-binding protein, which is involved in PLP homeostasis. The sequence is that of Pyridoxal phosphate homeostasis protein from Buchnera aphidicola subsp. Schizaphis graminum (strain Sg).